Here is a 210-residue protein sequence, read N- to C-terminus: Mediator of RNA polymerase II transcription subunit 20 (210 aa).

Belongs to the Mediator complex subunit 20 family. As to quaternary structure, component of the Mediator complex, which is composed of at least 21 subunits that form three structurally distinct submodules. The Mediator head module contains MED6, MED8, MED11, SRB4/MED17, SRB5/MED18, ROX3/MED19, SRB2/MED20 and SRB6/MED22, the middle module contains MED1, MED4, NUT1/MED5, MED7, CSE2/MED9, NUT2/MED10, SRB7/MED21 and SOH1/MED31, and the tail module contains MED2, PGD1/MED3, RGR1/MED14, GAL11/MED15 and SIN4/MED16. The head and the middle modules interact directly with RNA polymerase II, whereas the elongated tail module interacts with gene-specific regulatory proteins. MED1 interacts directly with MED4 and MED7. SRB2/MED20 interacts directly with SRB4/MED17 and SRB5/MED18.

It localises to the nucleus. Functionally, component of the Mediator complex, a coactivator involved in the regulated transcription of nearly all RNA polymerase II-dependent genes. Mediator functions as a bridge to convey information from gene-specific regulatory proteins to the basal RNA polymerase II transcription machinery. The Mediator complex, having a compact conformation in its free form, is recruited to promoters by direct interactions with regulatory proteins and serves for the assembly of a functional preinitiation complex with RNA polymerase II and the general transcription factors. The Mediator complex unfolds to an extended conformation and partially surrounds RNA polymerase II, specifically interacting with the unphosphorylated form of the C-terminal domain (CTD) of RNA polymerase II. The Mediator complex dissociates from the RNA polymerase II holoenzyme and stays at the promoter when transcriptional elongation begins. This is Mediator of RNA polymerase II transcription subunit 20 (SRB2) from Saccharomyces cerevisiae (strain ATCC 204508 / S288c) (Baker's yeast).